The chain runs to 207 residues: MSEGILFIISAPSGTGKSSLIQGLLKSKTLYNTRVSISHTTRIIRPGELHGKHYYFISKKEFEIMIKQEYFLEYAKVFSNYYGTSRKYIEKMLFSGIDVFLDIDWQGAKQIKCKMPKSKSIFLLPPSKDTLYKRLRERGQDSDSVIANRMEKAVDEMQHYSEYDYLIINDDFKQAVNDLITIITAEHLCLFHQKNKHNLLISNLLKC.

The Guanylate kinase-like domain maps to 4–184; that stretch reads GILFIISAPS…AVNDLITIIT (181 aa). 11–18 contributes to the ATP binding site; it reads APSGTGKS.

This sequence belongs to the guanylate kinase family.

It is found in the cytoplasm. It carries out the reaction GMP + ATP = GDP + ADP. Its function is as follows. Essential for recycling GMP and indirectly, cGMP. This is Guanylate kinase (gmk) from Buchnera aphidicola subsp. Acyrthosiphon pisum (strain APS) (Acyrthosiphon pisum symbiotic bacterium).